The sequence spans 23 residues: Conotoxin as25a (23 aa).

Proline 4 is subject to 4-hydroxyproline; partial. 4-hydroxyproline; partial; alternate is present on proline 23. Proline 23 carries the proline amide; alternate modification.

Post-translationally, the name as25b given in PubMed:23474143 corresponds to the hydroxylated peptide. The amidation of the C-terminus of this hydroxylated peptide is not directly confirmed. Contains 3 disulfide bonds. In terms of tissue distribution, expressed by the venom duct.

The protein resides in the secreted. In terms of biological role, upon intracranial injection in mice, as25a (the toxin without the two 4-hydroxyprolines) provokes paralysis of the hind limbs and death with a dose of 240 pmol. The chain is Conotoxin as25a from Conus cancellatus (Cancellate cone).